Reading from the N-terminus, the 263-residue chain is Endonuclease 8 (263 aa).

The active-site Schiff-base intermediate with DNA is Pro-2. Residue Glu-3 is the Proton donor of the active site. The active-site Proton donor; for beta-elimination activity is Lys-53. DNA is bound by residues Gln-70, Arg-125, and Asn-169. The FPG-type zinc finger occupies 229–263; the sequence is KVFHRDGEVCERCGGIIEKTTLSSRPFYWCPHCQK. Arg-253 acts as the Proton donor; for delta-elimination activity in catalysis.

This sequence belongs to the FPG family. Zn(2+) serves as cofactor.

It catalyses the reaction 2'-deoxyribonucleotide-(2'-deoxyribose 5'-phosphate)-2'-deoxyribonucleotide-DNA = a 3'-end 2'-deoxyribonucleotide-(2,3-dehydro-2,3-deoxyribose 5'-phosphate)-DNA + a 5'-end 5'-phospho-2'-deoxyribonucleoside-DNA + H(+). Functionally, involved in base excision repair of DNA damaged by oxidation or by mutagenic agents. Acts as a DNA glycosylase that recognizes and removes damaged bases. Has a preference for oxidized pyrimidines, such as thymine glycol, 5,6-dihydrouracil and 5,6-dihydrothymine. Has AP (apurinic/apyrimidinic) lyase activity and introduces nicks in the DNA strand. Cleaves the DNA backbone by beta-delta elimination to generate a single-strand break at the site of the removed base with both 3'- and 5'-phosphates. The protein is Endonuclease 8 of Salmonella newport (strain SL254).